The following is a 101-amino-acid chain: Urease subunit beta (101 aa).

Belongs to the urease beta subunit family. In terms of assembly, heterotrimer of UreA (gamma), UreB (beta) and UreC (alpha) subunits. Three heterotrimers associate to form the active enzyme.

It is found in the cytoplasm. It carries out the reaction urea + 2 H2O + H(+) = hydrogencarbonate + 2 NH4(+). The protein operates within nitrogen metabolism; urea degradation; CO(2) and NH(3) from urea (urease route): step 1/1. The chain is Urease subunit beta from Burkholderia ambifaria (strain MC40-6).